A 222-amino-acid polypeptide reads, in one-letter code: Orotate phosphoribosyltransferase (222 aa).

Lys29 lines the 5-phospho-alpha-D-ribose 1-diphosphate pocket. An orotate-binding site is contributed by 37–38; that stretch reads FF. 5-phospho-alpha-D-ribose 1-diphosphate-binding positions include 75–76, Arg101, Lys102, Lys105, His107, and 126–134; these read YK and DDVISAGTS. The orotate site is built by Ser130 and Arg158.

Belongs to the purine/pyrimidine phosphoribosyltransferase family. PyrE subfamily. In terms of assembly, homodimer. The cofactor is Mg(2+).

The enzyme catalyses orotidine 5'-phosphate + diphosphate = orotate + 5-phospho-alpha-D-ribose 1-diphosphate. The protein operates within pyrimidine metabolism; UMP biosynthesis via de novo pathway; UMP from orotate: step 1/2. Functionally, catalyzes the transfer of a ribosyl phosphate group from 5-phosphoribose 1-diphosphate to orotate, leading to the formation of orotidine monophosphate (OMP). The sequence is that of Orotate phosphoribosyltransferase from Polynucleobacter necessarius subsp. necessarius (strain STIR1).